Reading from the N-terminus, the 265-residue chain is Small ribosomal subunit protein uS2 (265 aa).

The tract at residues 231-265 (VEEEYEDYEGSEEDYDYDETEYADSVIPEDGEEAE) is disordered.

This sequence belongs to the universal ribosomal protein uS2 family.

This Nostoc sp. (strain PCC 7120 / SAG 25.82 / UTEX 2576) protein is Small ribosomal subunit protein uS2.